A 215-amino-acid polypeptide reads, in one-letter code: Superoxide dismutase [Mn] (215 aa).

Residues H27, H83, D170, and H174 each contribute to the Mn(2+) site.

The protein belongs to the iron/manganese superoxide dismutase family. Homodimer. Requires Mn(2+) as cofactor.

It catalyses the reaction 2 superoxide + 2 H(+) = H2O2 + O2. In terms of biological role, destroys superoxide anion radicals which are normally produced within the cells and which are toxic to biological systems. The chain is Superoxide dismutase [Mn] (sodA) from Haemophilus influenzae (strain ATCC 51907 / DSM 11121 / KW20 / Rd).